We begin with the raw amino-acid sequence, 96 residues long: Small ribosomal subunit protein bS6 (96 aa).

Belongs to the bacterial ribosomal protein bS6 family.

Functionally, binds together with bS18 to 16S ribosomal RNA. This Natranaerobius thermophilus (strain ATCC BAA-1301 / DSM 18059 / JW/NM-WN-LF) protein is Small ribosomal subunit protein bS6.